The following is a 314-amino-acid chain: Protein REGULATOR OF FATTY ACID COMPOSITION 3, chloroplastic (314 aa).

The transit peptide at 1–47 (MESLLHASSSLVSLRPRIDGRDSFINPSRVCLNPSLGRRGSKPLPLV) directs the protein to the chloroplast. Disordered regions lie at residues 49 to 73 (AAKK…ATGP) and 214 to 314 (AITE…NVGG). Positions 56–69 (KKDDNHNFSARPDE) are enriched in basic and acidic residues. 2 stretches are compositionally biased toward acidic residues: residues 233 to 269 (EYYD…DDDG) and 277 to 294 (GDEE…EQEE). Over residues 295–308 (GQDKSTNGRRETRR) the composition is skewed to basic and acidic residues.

This sequence belongs to the bacterial ribosomal protein bS6 family. Interacts with CFM3B/SPRT2 in plastids. Expressed ubiquitously in roots, leaves, stems, flower buds, flowers and siliques.

The protein localises to the plastid. It localises to the chloroplast. Prevents non-specific action of the splicing factor CFM3b during plastid rRNA biogenesis to improve the accuracy of plastid rRNA processing. Required for plastid functions such as photosynthesis, intracellular distribution, plastid rRNAs biosynthesis and plastid gene expression in roots. Involved in a sucrose-conditional process important for the organization of root lateral and apical meristems (e.g. establishment of RAM from pericycle and symplasmic connectivity), and subsequent primary and lateral roots development. Modulates C18 unsaturated fatty acid metabolism. This chain is Protein REGULATOR OF FATTY ACID COMPOSITION 3, chloroplastic, found in Arabidopsis thaliana (Mouse-ear cress).